We begin with the raw amino-acid sequence, 626 residues long: (+)-3-carene synthase 1, chloroplastic (626 aa).

Residues 1-45 (MSLISAVPLASSCVSKSLISSVREHTALRRAIATLQMSRRGKSVA) constitute a chloroplast transit peptide. Positions 377, 381, and 529 each coordinate Mg(2+). Residues 377 to 381 (DDMYD) carry the DDXXD motif motif.

The protein belongs to the terpene synthase family. Tpsd subfamily. Requires Mg(2+) as cofactor. Mn(2+) serves as cofactor.

It is found in the plastid. It localises to the chloroplast. The catalysed reaction is (2E)-geranyl diphosphate = (+)-car-3-ene + diphosphate. The enzyme catalyses (2E)-geranyl diphosphate = terpinolene + diphosphate. It participates in terpene metabolism; oleoresin biosynthesis. The protein operates within secondary metabolite biosynthesis; terpenoid biosynthesis. Monoterpene synthase (TPS) involved in the biosynthesis of monoterpene natural products included in conifer oleoresin secretions and volatile emissions; these compounds contribute to biotic and abiotic stress defense against herbivores and pathogens. Catalyzes the conversion of (2E)-geranyl diphosphate (GPP) to (+)-car-3-ene and, to a lower extent, to terpinolene. This chain is (+)-3-carene synthase 1, chloroplastic, found in Pinus contorta (Shore pine).